Consider the following 69-residue polypeptide: Alpha-conotoxin Mr1.7a (69 aa).

The signal sequence occupies residues 1 to 21 (MGMRMMFTVFLLVVLATTVVS). Positions 22 to 49 (FTSNRVLDPAFRRRNAAAKASDLIALNA) are excised as a propeptide. P52 and P58 each carry 4-hydroxyproline; in Mr1.7b. Intrachain disulfides connect C54-C60 and C55-C68. The segment at 56–58 (THP) is lacks the Ser-Xaa-Pro motif that is crucial for potent interaction with nAChR. Position 68 is a cysteine amide (C68).

Belongs to the conotoxin A superfamily. Post-translationally, two 4-hydroxyprolines have been detected by MS but the assignment of which of the three prolines is modified is uncertain. As to expression, expressed by the venom duct.

It localises to the secreted. In terms of biological role, acts as a co-agonist with PNU (an alpha-7 nAChR-selective allosteric modulator) at the endogenous alpha-7/CHRNA7 nicotinic acetylcholine receptors (nAChR) when tested in human SH-SY5Y neuroblastoma cells. Is the third alpha-conotoxin that acts as an agonist (after alpha-conotoxin SrIA/SrIB). Also acts as an antagonist at human alpha-7 nAChRs heterologously expressed in Xenopus oocytes. Has possibly a distinct nAChR binding mode from other alpha-conotoxins, due to a different three residue motif (lacks the Ser-Xaa-Pro motif). Acts as a weak partial agonist at alpha-7/CHRNA7 nicotinic acetylcholine receptors (nAChR) when tested in human SH-SY5Y neuroblastoma cells. Has possibly a distinct nAChR binding mode from other alpha-conotoxins, due to a different three residue motif (lacks the Ser-Xaa-Pro motif). This Conus marmoreus (Marble cone) protein is Alpha-conotoxin Mr1.7a.